The chain runs to 118 residues: UPF0102 protein RSal33209_1090 (118 aa).

This sequence belongs to the UPF0102 family.

The sequence is that of UPF0102 protein RSal33209_1090 from Renibacterium salmoninarum (strain ATCC 33209 / DSM 20767 / JCM 11484 / NBRC 15589 / NCIMB 2235).